We begin with the raw amino-acid sequence, 312 residues long: UDP-N-acetylenolpyruvoylglucosamine reductase (312 aa).

An FAD-binding PCMH-type domain is found at 30 to 202 (RVGGPAQWLA…VAAQFQLEPG (173 aa)). Residue arginine 181 is part of the active site. The Proton donor role is filled by serine 232. The active site involves glutamate 302.

It belongs to the MurB family. It depends on FAD as a cofactor.

It localises to the cytoplasm. The enzyme catalyses UDP-N-acetyl-alpha-D-muramate + NADP(+) = UDP-N-acetyl-3-O-(1-carboxyvinyl)-alpha-D-glucosamine + NADPH + H(+). The protein operates within cell wall biogenesis; peptidoglycan biosynthesis. Functionally, cell wall formation. The sequence is that of UDP-N-acetylenolpyruvoylglucosamine reductase from Synechococcus sp. (strain CC9311).